Reading from the N-terminus, the 540-residue chain is MLFCDDSKKYLKEQNINLKNEFDKDDKRVEKFSLKHQNIYFDYSKNLINDYILKSLLESAEKSSLKDKIKQMFNGAKINSTEHRAVLHTALRDLSSTPLIVDGQDIRQEVTKEKQRVKELVEKVVSGRWRGFSGKKITDIVNIGIGGSDLGPKMVVRALQPYHCTDLKVHFVSNVDADSLLQALHVVDPETTLFIIASKSFSTEETLLNSISAREWLLDHYEDEKAVANHFVAISSKLDKVKEFGIDLEHCYKMWDWVGGRYSLWSSIGMSIAFAIGYDNFEKLLAGAYSVDKHFKETEFSKNIPVIMALLASYYSCTYNSQSQALLPYDERLCYFVDYLQQADMESNGKSVNIAGETVNYQTGVVLWGGVGTNGQHAFHQLLHQGNIFIPVDFIAIATSHHNYDNHQQALLANCFAQSQALMFGQSYDMVYNELLKSGLNETQAKELAAHKVIPGNRPSTTILLDELSPYSLGALIALYEHKIFVQGVLWDINSYDQWGVELGKKLGKNILKAMNDDSSDEYQNLDDSTRQLIAKVKNK.

The Proton donor role is filled by E346. Active-site residues include H377 and K505.

It belongs to the GPI family.

It is found in the cytoplasm. The enzyme catalyses alpha-D-glucose 6-phosphate = beta-D-fructose 6-phosphate. Its pathway is carbohydrate biosynthesis; gluconeogenesis. The protein operates within carbohydrate degradation; glycolysis; D-glyceraldehyde 3-phosphate and glycerone phosphate from D-glucose: step 2/4. In terms of biological role, catalyzes the reversible isomerization of glucose-6-phosphate to fructose-6-phosphate. This is Glucose-6-phosphate isomerase from Francisella tularensis subsp. tularensis (strain SCHU S4 / Schu 4).